We begin with the raw amino-acid sequence, 31 residues long: Photosystem II reaction center protein Psb30 (31 aa).

A helical membrane pass occupies residues isoleucine 5 to phenylalanine 25.

The protein belongs to the Psb30/Ycf12 family. PSII is composed of 1 copy each of membrane proteins PsbA, PsbB, PsbC, PsbD, PsbE, PsbF, PsbH, PsbI, PsbJ, PsbK, PsbL, PsbM, PsbT, PsbX, PsbY, PsbZ, Psb30/Ycf12, peripheral proteins of the oxygen-evolving complex and a large number of cofactors. It forms dimeric complexes.

It is found in the plastid. The protein localises to the chloroplast thylakoid membrane. Functionally, a core subunit of photosystem II (PSII), probably helps stabilize the reaction center. In Phacus acuminatus, this protein is Photosystem II reaction center protein Psb30.